A 376-amino-acid chain; its full sequence is Succinate--CoA ligase [ADP-forming] subunit beta (376 aa).

The ATP-grasp domain occupies 9-234 (KAIAKKYGIP…ERELSELEKE (226 aa)). ATP-binding positions include Lys-45, 52–54 (GRG), Glu-91, Glu-94, and Glu-99. Mg(2+) contacts are provided by Asn-191 and Asp-204. Substrate-binding positions include Asn-254 and 311–313 (GIT).

The protein belongs to the succinate/malate CoA ligase beta subunit family. As to quaternary structure, heterotetramer of two alpha and two beta subunits. The cofactor is Mg(2+).

It carries out the reaction succinate + ATP + CoA = succinyl-CoA + ADP + phosphate. The enzyme catalyses GTP + succinate + CoA = succinyl-CoA + GDP + phosphate. The protein operates within carbohydrate metabolism; tricarboxylic acid cycle; succinate from succinyl-CoA (ligase route): step 1/1. Functionally, succinyl-CoA synthetase functions in the citric acid cycle (TCA), coupling the hydrolysis of succinyl-CoA to the synthesis of either ATP or GTP and thus represents the only step of substrate-level phosphorylation in the TCA. The beta subunit provides nucleotide specificity of the enzyme and binds the substrate succinate, while the binding sites for coenzyme A and phosphate are found in the alpha subunit. The chain is Succinate--CoA ligase [ADP-forming] subunit beta from Ignicoccus hospitalis (strain KIN4/I / DSM 18386 / JCM 14125).